Reading from the N-terminus, the 295-residue chain is uncharacterized protein (295 aa).

The N-terminal stretch at 1-19 (MFRKFLFIPLLIVTSLVKA) is a signal peptide. The disordered stretch occupies residues 274-295 (KRNNPPLKNNNAKSKNSYETHK). Over residues 276–288 (NNPPLKNNNAKSK) the composition is skewed to low complexity.

This is an uncharacterized protein from Rickettsia typhi (strain ATCC VR-144 / Wilmington).